The following is a 220-amino-acid chain: Uracil-DNA glycosylase (220 aa).

Catalysis depends on Asp-60, which acts as the Proton acceptor.

It belongs to the uracil-DNA glycosylase (UDG) superfamily. UNG family.

Its subcellular location is the cytoplasm. It carries out the reaction Hydrolyzes single-stranded DNA or mismatched double-stranded DNA and polynucleotides, releasing free uracil.. Functionally, excises uracil residues from the DNA which can arise as a result of misincorporation of dUMP residues by DNA polymerase or due to deamination of cytosine. The protein is Uracil-DNA glycosylase of Francisella tularensis subsp. holarctica (strain FTNF002-00 / FTA).